We begin with the raw amino-acid sequence, 414 residues long: Probable sugar phosphate/phosphate translocator At1g06470 (414 aa).

Transmembrane regions (helical) follow at residues 72–92 (VLKTLFFILVWYTFSTFLTLY), 101–121 (LGKFPAPLLMNTIHFSIQAVL), 172–192 (TFATMCKSAAPIFLLLFAFAF), 197–217 (PSLKLFGIISVISAGVLLTVA), 224–244 (FWGFVFVMLAAVMSGFRWCMT), 259–279 (FIFMSCVAPVMAIATGLLSLL), 303–323 (FLMLFGGALAFCMVLTEYVLV), 328–348 (AVTVTIAGVVKEAVTIVVAVF), and 354–374 (FTWLKGVGLMIIMVGVSLFNW). The EamA domain maps to 106-216 (APLLMNTIHF…VISAGVLLTV (111 aa)).

The protein belongs to the TPT transporter family. TPT (TC 2.A.7.9) subfamily.

It localises to the membrane. This chain is Probable sugar phosphate/phosphate translocator At1g06470, found in Arabidopsis thaliana (Mouse-ear cress).